The chain runs to 325 residues: Bifunctional nuclease 2 (325 aa).

One can recognise a BFN domain in the interval 119-254 (CVHNNSQGRN…SLAYSDGIRS (136 aa)). The UVR domain occupies 285–320 (EAQEFGLIRNMLIAAVEERYKDAATWRDKLMLLRSK).

The protein belongs to the bifunctional nuclease family.

It localises to the nucleus. Functionally, bifunctional nuclease with both RNase and DNase activities. Involved in basal defense response. Participates in abscisic acid-derived callose deposition following infection by a necrotrophic pathogen. In Oryza sativa subsp. japonica (Rice), this protein is Bifunctional nuclease 2 (BBD2).